A 96-amino-acid polypeptide reads, in one-letter code: C-C motif chemokine 1 (96 aa).

The signal sequence occupies residues 1–23 (MQIITTALVCLLLAGMWPEDVDS). Cystine bridges form between Cys33–Cys57, Cys34–Cys73, and Cys49–Cys91. N-linked (GlcNAc...) asparagine glycosylation is present at Asn52.

The protein belongs to the intercrine beta (chemokine CC) family. In terms of assembly, monomer.

It is found in the secreted. Functionally, cytokine that is chemotactic for monocytes but not for neutrophils. Binds to CCR8. This Homo sapiens (Human) protein is C-C motif chemokine 1 (CCL1).